The chain runs to 302 residues: Arginase (302 aa).

Positions 103, 126, 128, and 130 each coordinate Mn(2+). Residues 128–132 (HGDLN), 139–141 (SGN), and Asp-180 each bind substrate. Residues Asp-229 and Asp-231 each coordinate Mn(2+). Substrate is bound by residues Thr-243 and Glu-274.

This sequence belongs to the arginase family. Requires Mn(2+) as cofactor.

The catalysed reaction is L-arginine + H2O = urea + L-ornithine. It functions in the pathway nitrogen metabolism; urea cycle; L-ornithine and urea from L-arginine: step 1/1. The sequence is that of Arginase (arg) from Staphylococcus aureus (strain MRSA252).